A 742-amino-acid chain; its full sequence is TBC1 domain family member 25 (742 aa).

The tract at residues 1–22 (MRPPAQARWEGQGPTAPLRLRS) is disordered. Ser-194 is modified (phosphoserine). Position 214 is a phosphothreonine (Thr-214). A Rab-GAP TBC domain is found at 282–488 (GVEPSLRKVV…RMLEVTWSSL (207 aa)). Ser-560 carries the post-translational modification Phosphoserine. The tract at residues 592-664 (SLSEPLLNSP…PPMGLPPPQE (73 aa)) is disordered. Residues 600–628 (SPDPLLSTSSRPDSPSSSSPPSTQEASPS) show a composition bias toward low complexity. The segment covering 649–663 (KPVPPPPPMGLPPPQ) has biased composition (pro residues).

As to quaternary structure, interacts (via N-terminus) with MAP1LC3B, GABARAP and GABARAPL2.

The protein resides in the cytoplasm. It is found in the cytoplasmic vesicle. It localises to the autophagosome. Acts as a GTPase-activating protein specific for RAB33B. Involved in the regulation of autophagosome maturation, the process in which autophagosomes fuse with endosomes and lysosomes. The protein is TBC1 domain family member 25 (Tbc1d25) of Mus musculus (Mouse).